We begin with the raw amino-acid sequence, 300 residues long: Protein CANDIDATE G-PROTEIN COUPLED RECEPTOR 2 (300 aa).

Helical transmembrane passes span 37–57 (GFLH…YLAY), 73–93 (IMIA…AWCC), 110–130 (LTLF…AFLF), 152–172 (IGLD…PLFI), 183–203 (WGLW…IFFM), 222–242 (ITVM…TANG), and 245–265 (FGLW…LPLL).

The protein belongs to the UPF0359 family. Interacts with GPA1. Expressed at low levels in seedlings.

It localises to the cell membrane. Functionally, plays a role in plants and microbes interactions. G-protein coupled melatonin receptor involved in root growth mediated by the bacterial quorum-sensing signals N-acyl-homoserine lactones (AHLs). Binds to melatonin. Phytomelatonin receptor required, in collaboration with GPA1, for melatonin-mediated stomatal closure involving H(2)O(2) and Ca(2+) signals. Essential for melatonin-mediated plant response to osmotic stress probably by activating reactive oxygen species (ROS) scavenging ability. This Arabidopsis thaliana (Mouse-ear cress) protein is Protein CANDIDATE G-PROTEIN COUPLED RECEPTOR 2.